A 1015-amino-acid chain; its full sequence is Beta-galactosidase (1015 aa).

The Proton donor role is filled by E434. The active-site Nucleophile is the E513.

The protein belongs to the glycosyl hydrolase 2 family. Requires Mg(2+) as cofactor. It depends on Mn(2+) as a cofactor.

The enzyme catalyses Hydrolysis of terminal non-reducing beta-D-galactose residues in beta-D-galactosides.. The polypeptide is Beta-galactosidase (lacZ) (Arthrobacter sp. (strain B7)).